The chain runs to 88 residues: Small ribosomal subunit protein uS15 (88 aa).

Belongs to the universal ribosomal protein uS15 family. Part of the 30S ribosomal subunit. Forms a bridge to the 50S subunit in the 70S ribosome, contacting the 23S rRNA.

Functionally, one of the primary rRNA binding proteins, it binds directly to 16S rRNA where it helps nucleate assembly of the platform of the 30S subunit by binding and bridging several RNA helices of the 16S rRNA. In terms of biological role, forms an intersubunit bridge (bridge B4) with the 23S rRNA of the 50S subunit in the ribosome. The chain is Small ribosomal subunit protein uS15 from Geobacter sulfurreducens (strain ATCC 51573 / DSM 12127 / PCA).